Reading from the N-terminus, the 1331-residue chain is Contactin-associated protein-like 2 (1331 aa).

Residues Met1–Thr27 form the signal peptide. Residues Ala28–Ala1262 are Extracellular-facing. An F5/8 type C domain is found at Cys35 to Cys181. Residues Cys35 and Cys181 are joined by a disulfide bond. The 153-residue stretch at Phe216–Cys368 folds into the Laminin G-like 1 domain. N-linked (GlcNAc...) asparagine glycosylation is found at Asn289, Asn346, Asn363, Asn379, Asn436, Asn506, Asn507, and Asn546. A disulfide bond links Cys336 and Cys368. The 152-residue stretch at Phe401 to Cys552 folds into the Laminin G-like 2 domain. 4 disulfides stabilise this stretch: Cys520-Cys552, Cys558-Cys569, Cys563-Cys578, and Cys580-Cys590. The EGF-like 1 domain occupies Ile554–His591. The 207-residue stretch at Asn592 to Trp798 folds into the Fibrinogen C-terminal domain. N-linked (GlcNAc...) asparagine glycans are attached at residues Asn630 and Asn735. The Laminin G-like 3 domain maps to Asn799 to Cys963. Intrachain disulfides connect Cys936–Cys963, Cys967–Cys980, Cys974–Cys989, and Cys991–Cys1001. The 40-residue stretch at Cys963–Asn1002 folds into the EGF-like 2 domain. Residues Ala1026–Asp1045 are disordered. Residues Phe1055–Cys1214 form the Laminin G-like 4 domain. N-linked (GlcNAc...) asparagine glycans are attached at residues Asn1116 and Asn1198. The cysteines at positions 1178 and 1214 are disulfide-linked. Residues Ile1263–Ile1283 form a helical membrane-spanning segment. Residues Arg1284–Ile1331 lie on the Cytoplasmic side of the membrane. Phosphoserine is present on residues Ser1303 and Ser1306.

It belongs to the neurexin family. In terms of assembly, interacts (via C-terminus) with KCNA2. Interacts with GPR37. In terms of tissue distribution, predominantly expressed in nervous system.

The protein resides in the membrane. The protein localises to the cell projection. It is found in the axon. It localises to the cell junction. Its subcellular location is the paranodal septate junction. Its function is as follows. Required for gap junction formation. Required, with CNTNAP1, for radial and longitudinal organization of myelinated axons. Plays a role in the formation of functional distinct domains critical for saltatory conduction of nerve impulses in myelinated nerve fibers. Demarcates the juxtaparanodal region of the axo-glial junction. This Homo sapiens (Human) protein is Contactin-associated protein-like 2 (CNTNAP2).